A 235-amino-acid polypeptide reads, in one-letter code: MTKQLNVDPAEISKFEDMASRWWDLEGEFKPLHQINPLRLNYVTDHAGGLFGKKILDVGCGGGILAESMAIEGADVTGLDMGKEPLTVARLHALETGAKLDYVLRTAEEQAELHPETYDIVTCMEMLEHVPNPASVIAACAKMVKPNGHVFFSTLNRNAKSYLFAIVGAEQLLKLVPKGTHDHKKFIRPSELIAMIDQTPLQDRHITGLHYNPLTDNYWLGKSVEVNYIVHTVKL.

S-adenosyl-L-methionine contacts are provided by Arg39, Gly59, Asp80, and Met124.

Belongs to the methyltransferase superfamily. UbiG/COQ3 family.

The enzyme catalyses a 3-demethylubiquinol + S-adenosyl-L-methionine = a ubiquinol + S-adenosyl-L-homocysteine + H(+). The catalysed reaction is a 3-(all-trans-polyprenyl)benzene-1,2-diol + S-adenosyl-L-methionine = a 2-methoxy-6-(all-trans-polyprenyl)phenol + S-adenosyl-L-homocysteine + H(+). Its pathway is cofactor biosynthesis; ubiquinone biosynthesis. In terms of biological role, O-methyltransferase that catalyzes the 2 O-methylation steps in the ubiquinone biosynthetic pathway. In Photobacterium profundum (strain SS9), this protein is Ubiquinone biosynthesis O-methyltransferase.